The primary structure comprises 300 residues: Ribosomal protein L11 methyltransferase (300 aa).

S-adenosyl-L-methionine is bound by residues Thr152, Gly173, Asp195, and Asn234.

It belongs to the methyltransferase superfamily. PrmA family.

The protein localises to the cytoplasm. The catalysed reaction is L-lysyl-[protein] + 3 S-adenosyl-L-methionine = N(6),N(6),N(6)-trimethyl-L-lysyl-[protein] + 3 S-adenosyl-L-homocysteine + 3 H(+). Methylates ribosomal protein L11. The chain is Ribosomal protein L11 methyltransferase from Burkholderia orbicola (strain MC0-3).